Reading from the N-terminus, the 205-residue chain is Regulator of G-protein signaling 4 (205 aa).

S-palmitoyl cysteine attachment occurs at residues Cys2, Cys12, and Cys95. The region spanning 62–178 is the RGS domain; sequence SLENLISHEC…LKSRFYLDLV (117 aa).

Post-translationally, palmitoylated on Cys-2 and/or Cys-12. In terms of processing, phosphorylated by cyclic GMP-dependent protein kinase.

Inhibits signal transduction by increasing the GTPase activity of G protein alpha subunits thereby driving them into their inactive GDP-bound form. Activity on G(z)-alpha is inhibited by phosphorylation of the G-protein. Activity on G(z)-alpha and G(i)-alpha-1 is inhibited by palmitoylation of the G-protein. The chain is Regulator of G-protein signaling 4 (RGS4) from Pongo abelii (Sumatran orangutan).